We begin with the raw amino-acid sequence, 239 residues long: DNA repair protein RecO (239 aa).

Belongs to the RecO family.

In terms of biological role, involved in DNA repair and RecF pathway recombination. The protein is DNA repair protein RecO of Bifidobacterium longum subsp. infantis (strain ATCC 15697 / DSM 20088 / JCM 1222 / NCTC 11817 / S12).